Consider the following 170-residue polypeptide: AP-5 complex subunit sigma-1 (170 aa).

As to quaternary structure, probably part of the adaptor protein complex 5 (AP-5) a tetramer composed of AP5B1, AP5M1, AP5S1 and AP5Z1. Interacts with ZFYVE26 and SPG11.

It localises to the cytoplasm. Its subcellular location is the cytosol. The protein localises to the late endosome membrane. The protein resides in the lysosome membrane. Its function is as follows. As part of AP-5, a probable fifth adaptor protein complex it may be involved in endosomal transport. This chain is AP-5 complex subunit sigma-1 (Ap5s1), found in Mus musculus (Mouse).